We begin with the raw amino-acid sequence, 98 residues long: NADH-ubiquinone oxidoreductase chain 4L (98 aa).

Transmembrane regions (helical) follow at residues 1-21 (MSLV…GLLM), 29-49 (SLLC…IMIL), and 61-81 (IILL…LVMV).

The protein belongs to the complex I subunit 4L family. As to quaternary structure, core subunit of respiratory chain NADH dehydrogenase (Complex I) which is composed of 45 different subunits.

The protein resides in the mitochondrion inner membrane. It catalyses the reaction a ubiquinone + NADH + 5 H(+)(in) = a ubiquinol + NAD(+) + 4 H(+)(out). Core subunit of the mitochondrial membrane respiratory chain NADH dehydrogenase (Complex I) which catalyzes electron transfer from NADH through the respiratory chain, using ubiquinone as an electron acceptor. Part of the enzyme membrane arm which is embedded in the lipid bilayer and involved in proton translocation. This is NADH-ubiquinone oxidoreductase chain 4L (MT-ND4L) from Urotrichus talpoides (Japanese shrew mole).